The following is a 75-amino-acid chain: MLEKAKIDRINELSKKKKAGTLTADEKVEQEKLRKEYIKSFRTHMKGTIENTTIIDPKGNDVTPHKIKQMRKNKK.

The interval isoleucine 55–lysine 75 is disordered. Residues histidine 65 to lysine 75 are compositionally biased toward basic residues.

The protein belongs to the UPF0291 family.

It localises to the cytoplasm. The protein is UPF0291 protein lin1342 of Listeria innocua serovar 6a (strain ATCC BAA-680 / CLIP 11262).